The following is a 981-amino-acid chain: Bifunctional glutamine synthetase adenylyltransferase/adenylyl-removing enzyme (981 aa).

The interval 1–473 is adenylyl removase; it reads MTMPLPSIEQ…RSVFNNLIGF (473 aa). Positions 479 to 981 are adenylyl transferase; sequence ADDSDNAWSD…HQIWQKLFFE (503 aa).

This sequence belongs to the GlnE family. Requires Mg(2+) as cofactor.

It carries out the reaction [glutamine synthetase]-O(4)-(5'-adenylyl)-L-tyrosine + phosphate = [glutamine synthetase]-L-tyrosine + ADP. The catalysed reaction is [glutamine synthetase]-L-tyrosine + ATP = [glutamine synthetase]-O(4)-(5'-adenylyl)-L-tyrosine + diphosphate. In terms of biological role, involved in the regulation of glutamine synthetase GlnA, a key enzyme in the process to assimilate ammonia. When cellular nitrogen levels are high, the C-terminal adenylyl transferase (AT) inactivates GlnA by covalent transfer of an adenylyl group from ATP to specific tyrosine residue of GlnA, thus reducing its activity. Conversely, when nitrogen levels are low, the N-terminal adenylyl removase (AR) activates GlnA by removing the adenylyl group by phosphorolysis, increasing its activity. The regulatory region of GlnE binds the signal transduction protein PII (GlnB) which indicates the nitrogen status of the cell. This chain is Bifunctional glutamine synthetase adenylyltransferase/adenylyl-removing enzyme, found in Mannheimia succiniciproducens (strain KCTC 0769BP / MBEL55E).